Consider the following 345-residue polypeptide: Golgi-associated RAB2 interactor protein 1B (345 aa).

2 disordered regions span residues 222–241 and 271–299; these read CSPS…SQPS and SRSS…PCTR. The span at 275 to 285 shows a compositional bias: basic and acidic residues; the sequence is KKTENKKDSSG.

It belongs to the GARIN family.

It is found in the golgi apparatus. In terms of biological role, RAB2B effector protein required for accurate acrosome formation and normal male fertility. In complex with RAB2A/RAB2B, seems to suppress excessive vesicle trafficking during acrosome formation. This chain is Golgi-associated RAB2 interactor protein 1B (GARIN1B), found in Bos taurus (Bovine).